Reading from the N-terminus, the 248-residue chain is Transcription factor MYBC1 (248 aa).

Positions 102 to 161 form a DNA-binding region, myb-like GARP; the sequence is TLKRPRLVWTPQLHKRFVDAVGHLGIKNAVPKTIMQLMSVEGLTRENVASHLQKYRLYLR.

Expressed in roots, leaves, stems, petioles, filaments, stigma, pedicels, sepals, anthers, petals, and siliques.

It is found in the nucleus. Probable transcription factor that acts as a negative regulator of freezing tolerance via a CBF-independent pathway. This is Transcription factor MYBC1 from Arabidopsis thaliana (Mouse-ear cress).